Reading from the N-terminus, the 224-residue chain is Putative O-methyltransferase MMAR_4217 (224 aa).

A compositionally biased stretch (polar residues) spans 1–11 (MHGTDSSSDTP). Residues 1–20 (MHGTDSSSDTPGQPAPSRAE) are disordered. S-adenosyl-L-methionine is bound by residues Val-51, Glu-73, 75 to 76 (GT), Ser-81, Asp-99, and Ile-100. Substrate is bound at residue Asp-147. Asp-149 contacts S-adenosyl-L-methionine.

This sequence belongs to the class I-like SAM-binding methyltransferase superfamily. Cation-dependent O-methyltransferase family.

This is Putative O-methyltransferase MMAR_4217 from Mycobacterium marinum (strain ATCC BAA-535 / M).